The sequence spans 547 residues: DNA ligase (547 aa).

Glu-244 serves as a coordination point for ATP. Lys-246 acts as the N6-AMP-lysine intermediate in catalysis. ATP-binding residues include Arg-251, Arg-266, Glu-295, Phe-334, Arg-405, and Lys-411.

This sequence belongs to the ATP-dependent DNA ligase family. Mg(2+) is required as a cofactor.

It catalyses the reaction ATP + (deoxyribonucleotide)n-3'-hydroxyl + 5'-phospho-(deoxyribonucleotide)m = (deoxyribonucleotide)n+m + AMP + diphosphate.. Functionally, DNA ligase that seals nicks in double-stranded DNA during DNA replication, DNA recombination and DNA repair. This chain is DNA ligase, found in Methanospirillum hungatei JF-1 (strain ATCC 27890 / DSM 864 / NBRC 100397 / JF-1).